The primary structure comprises 474 residues: MHTTTKRRKAMDWLNFDPIPEVDRLFRFTCKHPTLHVHMTGSYGHMFVDISDLPASARHYLALMAASRHRCLSLMDHHRRKFLEKGGQQMWLLGIDWSYMKFRKLDYLNRMLCHRPWMIHWKNLAVLFARRTPDGGPAFFSVCSLHHAVGIMSMTHAMCTVICCIGLERRVDLTQDEIDFLNIDDLDYWEARMSAYFRKVPDRRPTEVEYLISELKKTEKGQTRPPAKMCAMTTETIESLISAPAATYSSNRKNYSPVLLLANIDENGEDIMEKEPPCNYPIYSHHRTFGYIDFRKRPEKDIPPFRVEEFGWDHVYNTMNEYTDTLTSRLDRMFDHIRTLTGNMPSGSSHASGDGEPPAAVNQNEIDTAAFREAIWNYTQGLYGVRVDDYDYSKINRVLDKGTKTFIKLAACYPHKLTTEFTRALPGFKDSEKIHVVMMVAMARFQASMFHYTRAVCNYNAMCLSKKGWRKPLD.

Belongs to the sestrin family.

It is found in the nucleus. It localises to the cytoplasm. In terms of biological role, may function as a negative feedback regulator of TOR function. The polypeptide is Sestrin homolog (Caenorhabditis elegans).